The chain runs to 340 residues: S-adenosylmethionine:tRNA ribosyltransferase-isomerase (340 aa).

Belongs to the QueA family. In terms of assembly, monomer.

The protein localises to the cytoplasm. It carries out the reaction 7-aminomethyl-7-carbaguanosine(34) in tRNA + S-adenosyl-L-methionine = epoxyqueuosine(34) in tRNA + adenine + L-methionine + 2 H(+). The protein operates within tRNA modification; tRNA-queuosine biosynthesis. Its function is as follows. Transfers and isomerizes the ribose moiety from AdoMet to the 7-aminomethyl group of 7-deazaguanine (preQ1-tRNA) to give epoxyqueuosine (oQ-tRNA). This is S-adenosylmethionine:tRNA ribosyltransferase-isomerase from Francisella tularensis subsp. tularensis (strain FSC 198).